The primary structure comprises 115 residues: NADH-ubiquinone oxidoreductase chain 3 (115 aa).

Transmembrane regions (helical) follow at residues 4–24 (LTAL…AFWL), 55–75 (FFLV…LLPL), and 87–107 (MMLT…YEWM).

It belongs to the complex I subunit 3 family. Core subunit of respiratory chain NADH dehydrogenase (Complex I) which is composed of 45 different subunits. Interacts with TMEM186. Interacts with TMEM242.

Its subcellular location is the mitochondrion inner membrane. It catalyses the reaction a ubiquinone + NADH + 5 H(+)(in) = a ubiquinol + NAD(+) + 4 H(+)(out). In terms of biological role, core subunit of the mitochondrial membrane respiratory chain NADH dehydrogenase (Complex I) which catalyzes electron transfer from NADH through the respiratory chain, using ubiquinone as an electron acceptor. Essential for the catalytic activity of complex I. In Peromyscus boylii (Brush deermouse), this protein is NADH-ubiquinone oxidoreductase chain 3.